A 95-amino-acid chain; its full sequence is Aspartyl/glutamyl-tRNA(Asn/Gln) amidotransferase subunit C (95 aa).

The protein belongs to the GatC family. In terms of assembly, heterotrimer of A, B and C subunits.

It carries out the reaction L-glutamyl-tRNA(Gln) + L-glutamine + ATP + H2O = L-glutaminyl-tRNA(Gln) + L-glutamate + ADP + phosphate + H(+). The enzyme catalyses L-aspartyl-tRNA(Asn) + L-glutamine + ATP + H2O = L-asparaginyl-tRNA(Asn) + L-glutamate + ADP + phosphate + 2 H(+). Its function is as follows. Allows the formation of correctly charged Asn-tRNA(Asn) or Gln-tRNA(Gln) through the transamidation of misacylated Asp-tRNA(Asn) or Glu-tRNA(Gln) in organisms which lack either or both of asparaginyl-tRNA or glutaminyl-tRNA synthetases. The reaction takes place in the presence of glutamine and ATP through an activated phospho-Asp-tRNA(Asn) or phospho-Glu-tRNA(Gln). The polypeptide is Aspartyl/glutamyl-tRNA(Asn/Gln) amidotransferase subunit C (Rhodopseudomonas palustris (strain BisA53)).